Reading from the N-terminus, the 737-residue chain is Polyribonucleotide nucleotidyltransferase (737 aa).

Mg(2+) contacts are provided by Asp489 and Asp495. In terms of domain architecture, KH spans 556–615 (PKIDTIKIDVDKIKIVIGKGGETIDKIIAETGVKIDIDEEGNVSIYSSDQDAINRAKEII). The 69-residue stretch at 625–693 (DEVYRAKVVR…EKGRIDASMK (69 aa)) folds into the S1 motif domain. The segment at 691–737 (SMKALLPRPPKPEHDEKGEKSERPHRPRHQKDYKPKKEFTETPKDSE) is disordered. A compositionally biased stretch (basic and acidic residues) spans 700 to 737 (PKPEHDEKGEKSERPHRPRHQKDYKPKKEFTETPKDSE).

It belongs to the polyribonucleotide nucleotidyltransferase family. Mg(2+) serves as cofactor.

It localises to the cytoplasm. The enzyme catalyses RNA(n+1) + phosphate = RNA(n) + a ribonucleoside 5'-diphosphate. Involved in mRNA degradation. Catalyzes the phosphorolysis of single-stranded polyribonucleotides processively in the 3'- to 5'-direction. The polypeptide is Polyribonucleotide nucleotidyltransferase (Streptococcus pneumoniae serotype 2 (strain D39 / NCTC 7466)).